A 405-amino-acid polypeptide reads, in one-letter code: MIFTNNIAAFQNVVLVKKVKIVLLIFYGSIMFSMTQVNKEECDYYQNLNLGEIYYIYNPRYPLPYSGSKCTWTITSYHRINLKCSLVEFSENKNCNAGSLTVKKNFANKYCGNITLNIESTSNKMTVILTPPGRFFCEVRPIKRVKDSTNCNCGWKNPSRIVGGTNTGINEFPMMAGIKRTYEPGMICGATIISKRYVLTAAHCIIDENTTKLAIVVGEHDWSSKTETNATVLHSINKVIIHPKYDIIEKDDWQINDIALLKTEKDIKFGDKVGPACLPFQHFLDSFAGSDVTVLGWGHTSFNGMLSHILQKTTLNMLTQVECYKYYGNIMVNAMCAYAKGKDACQMDSGGPVLWQNPRTKRLVNIGIISWGAECGKYPNGNTKVGSYIDWIVSQTPDAEYCVIE.

The N-terminal stretch at 1–35 (MIFTNNIAAFQNVVLVKKVKIVLLIFYGSIMFSMT) is a signal peptide. 2 disulfide bridges follow: Cys-42-Cys-70 and Cys-95-Cys-111. Positions 42 to 147 (CDYYQNLNLG…EVRPIKRVKD (106 aa)) constitute a CUB domain. Asn-113 carries N-linked (GlcNAc...) asparagine glycosylation. Residues 161–397 (IVGGTNTGIN…YIDWIVSQTP (237 aa)) form the Peptidase S1 domain. An intrachain disulfide couples Cys-188 to Cys-204. His-203 functions as the Charge relay system in the catalytic mechanism. N-linked (GlcNAc...) asparagine glycosylation is found at Asn-209 and Asn-229. Asp-257 (charge relay system) is an active-site residue. Intrachain disulfides connect Cys-323–Cys-336 and Cys-345–Cys-375. Ser-349 functions as the Charge relay system in the catalytic mechanism.

Belongs to the peptidase S1 family. As to expression, expressed by the venom duct.

It localises to the secreted. This chain is Venom serine protease 34, found in Apis mellifera (Honeybee).